Here is a 400-residue protein sequence, read N- to C-terminus: Probable peptidoglycan glycosyltransferase FtsW (400 aa).

Topologically, residues 1 to 24 (MSTGSLPLGLPSRDSLDGLRNSVD) are cytoplasmic. The chain crosses the membrane as a helical span at residues 25-45 (LPLLAAAALLLGLGLIMVASA). Over 46 to 63 (SMDLGERYYGNTWHFFQR) the chain is Periplasmic. The helical transmembrane segment at 64–84 (QVLFAAIGLALATVMWAIPLE) threads the bilayer. Residues 85-88 (RWER) are Cytoplasmic-facing. A helical transmembrane segment spans residues 89 to 109 (AGPWLLILVMVLLIAVLLPGV). Residues 110-118 (GRTVNGATR) lie on the Periplasmic side of the membrane. A helical transmembrane segment spans residues 119 to 139 (WIPIGMFNLQVAEPVKLLVVM). The Cytoplasmic portion of the chain corresponds to 140-153 (YLAGYIVRHYSALR). Residues 154–174 (LHLRGFVRPLVVLGFGTVLLL) form a helical membrane-spanning segment. At 175-177 (LQP) the chain is on the periplasmic side. Residues 178-198 (DFGGAAIMLAIGMGMLFLAGA) traverse the membrane as a helical segment. K199 is a topological domain (cytoplasmic). The helical transmembrane segment at 200 to 220 (LWQFAALGATIAVGMAFVAVA) threads the bilayer. The Periplasmic portion of the chain corresponds to 221–278 (APYRVARLTAFLDPWQDPFATGFQLTQSLIAIGSGGWFGTGLGNSVQKLFYLPEAHND). Residues 279–299 (FLFAVFAEEFGFIGVLALIAL) form a helical membrane-spanning segment. Residues 300–324 (FAVVVWRCVKIGLWAERAGHAFGSH) are Cytoplasmic-facing. The chain crosses the membrane as a helical span at residues 325 to 345 (LAFGVAIWLALQSALNLAVNM). The Periplasmic segment spans residues 346 to 354 (GLLPTKGMT). Residues 355-375 (LPFLSYGGSSLIVTLMAIGLV) form a helical membrane-spanning segment. At 376-400 (MRVYREAQIPAPRQSTPPRRKRGQA) the chain is on the cytoplasmic side.

This sequence belongs to the SEDS family. FtsW subfamily.

It is found in the cell inner membrane. It catalyses the reaction [GlcNAc-(1-&gt;4)-Mur2Ac(oyl-L-Ala-gamma-D-Glu-L-Lys-D-Ala-D-Ala)](n)-di-trans,octa-cis-undecaprenyl diphosphate + beta-D-GlcNAc-(1-&gt;4)-Mur2Ac(oyl-L-Ala-gamma-D-Glu-L-Lys-D-Ala-D-Ala)-di-trans,octa-cis-undecaprenyl diphosphate = [GlcNAc-(1-&gt;4)-Mur2Ac(oyl-L-Ala-gamma-D-Glu-L-Lys-D-Ala-D-Ala)](n+1)-di-trans,octa-cis-undecaprenyl diphosphate + di-trans,octa-cis-undecaprenyl diphosphate + H(+). The protein operates within cell wall biogenesis; peptidoglycan biosynthesis. Its function is as follows. Peptidoglycan polymerase that is essential for cell division. This chain is Probable peptidoglycan glycosyltransferase FtsW, found in Thioalkalivibrio sp. (strain K90mix).